A 700-amino-acid chain; its full sequence is Sex comb on midleg-like protein 2 (700 aa).

The disordered stretch occupies residues 1-33 (MGQTVNEDSMDVKKENQEKTPQSSTSSVQRDDF). A compositionally biased stretch (polar residues) spans 19–28 (KTPQSSTSSV). MBT repeat units lie at residues 33–131 (FHWE…LQPP) and 139–240 (SSWP…LQPP). Positions 253–281 (TESSPSEASQHSMQSPQKTTLILPTQQVR) are enriched in polar residues. 2 disordered regions span residues 253-320 (TESS…EKPL) and 466-550 (PFSS…SSLN). Ser256, Ser261, Ser267, Ser299, and Ser300 each carry phosphoserine. A Phosphothreonine modification is found at Thr305. The segment covering 476–495 (SSAEHDKNQSAKEDVTERQS) has biased composition (basic and acidic residues). Ser499 is modified (phosphoserine). Thr503 bears the Phosphothreonine mark. Ser511 carries the post-translational modification Phosphoserine. Residue Lys518 forms a Glycyl lysine isopeptide (Lys-Gly) (interchain with G-Cter in SUMO2) linkage. Ser522 carries the post-translational modification Phosphoserine. Over residues 535–545 (PKEENLSEDSK) the composition is skewed to basic and acidic residues. Residue Lys536 forms a Glycyl lysine isopeptide (Lys-Gly) (interchain with G-Cter in SUMO2) linkage. Phosphoserine occurs at positions 570, 583, 590, and 594. Residues 575-584 (RSVPGTTSSP) are compositionally biased toward polar residues. Residues 575–594 (RSVPGTTSSPLVGDISPKSS) form a disordered region. Residues Lys599 and Lys605 each participate in a glycyl lysine isopeptide (Lys-Gly) (interchain with G-Cter in SUMO2) cross-link. Residues 631–700 (WSVDEVIQFM…IEKLKEGKYS (70 aa)) enclose the SAM domain.

The protein belongs to the SCM family. Highly expressed in placenta, thymus and testis. Detected at lower levels in brain, liver, skeletal muscle, pancreas and ovary.

Its subcellular location is the nucleus. Its function is as follows. Putative Polycomb group (PcG) protein. PcG proteins act by forming multiprotein complexes, which are required to maintain the transcriptionally repressive state of homeotic genes throughout development. The chain is Sex comb on midleg-like protein 2 (SCML2) from Homo sapiens (Human).